The sequence spans 698 residues: DNA-directed RNA polymerase subunit beta' (698 aa).

The Zn(2+) site is built by C69, C71, C89, and C92. Mg(2+) is bound by residues D509, D511, and D513.

Belongs to the RNA polymerase beta' chain family. RpoC1 subfamily. In terms of assembly, in plastids the minimal PEP RNA polymerase catalytic core is composed of four subunits: alpha, beta, beta', and beta''. When a (nuclear-encoded) sigma factor is associated with the core the holoenzyme is formed, which can initiate transcription. Mg(2+) serves as cofactor. It depends on Zn(2+) as a cofactor.

It localises to the plastid. It is found in the chloroplast. The enzyme catalyses RNA(n) + a ribonucleoside 5'-triphosphate = RNA(n+1) + diphosphate. DNA-dependent RNA polymerase catalyzes the transcription of DNA into RNA using the four ribonucleoside triphosphates as substrates. The protein is DNA-directed RNA polymerase subunit beta' of Cryptomeria japonica (Japanese cedar).